The chain runs to 441 residues: Diuretic hormone receptor (441 aa).

N-linked (GlcNAc...) asparagine glycans are attached at residues Asn99, Asn107, and Asn112. The helical transmembrane segment at 135-158 (FVFFVGFCLSLVAIAVAIWIFLYF) threads the bilayer. Topologically, residues 159–166 (KDLRCLRN) are cytoplasmic. The helical transmembrane segment at 167-187 (TIHTNLMATYICNDATWIISA) threads the bilayer. The Extracellular portion of the chain corresponds to 188 to 194 (VVQEYVE). Residues 195 to 224 (NGGLCSVLAVLMHYFYLTNFFWMFVEGLYL) traverse the membrane as a helical segment. The Cytoplasmic portion of the chain corresponds to 225–238 (FLLVVATFTGEKVK). The helical transmembrane segment at 239–260 (LQIYIIIGWGIPGVIVVTWAII) threads the bilayer. The Extracellular segment spans residues 261–291 (KHLGKTAPDNAGESHPMVLLIKHCPWMAEDY). A helical membrane pass occupies residues 292 to 315 (FDWIHQAPVITVLAVNLVFLFSIM). Topologically, residues 316–338 (WVLITKLQSANTAETQQYRKATK) are cytoplasmic. A helical membrane pass occupies residues 339–357 (ALLVLFPLLGITYILMMQG). At 358 to 371 (PMDGVAGHVFRNAQ) the chain is on the extracellular side. A helical membrane pass occupies residues 372–391 (ALLLSLQGFTVALFYCFLNT). At 392–441 (EVQNTLRHRMSRWRETRTVGGGRRYTLSGHSKDWSPRSRTESIRCLQHRS) the chain is on the cytoplasmic side.

This sequence belongs to the G-protein coupled receptor 2 family. As to expression, expressed in Malpighian tubules.

The protein localises to the cell membrane. Its function is as follows. Receptor for the insect diurectic hormone. The activity of this receptor is mediated by G proteins which activate adenylyl cyclase. The sequence is that of Diuretic hormone receptor from Acheta domesticus (House cricket).